The chain runs to 414 residues: Dual-specificity RNA methyltransferase RlmN (414 aa).

The active-site Proton acceptor is E127. Positions 133–380 (GEGRGTLCVS…SPIRMPRGRD (248 aa)) constitute a Radical SAM core domain. A disulfide bond links C140 and C385. C147, C151, and C154 together coordinate [4Fe-4S] cluster. S-adenosyl-L-methionine contacts are provided by residues 211-212 (GE), S243, 265-267 (SLH), and N342. C385 serves as the catalytic S-methylcysteine intermediate.

The protein belongs to the radical SAM superfamily. RlmN family. Requires [4Fe-4S] cluster as cofactor.

The protein localises to the cytoplasm. The catalysed reaction is adenosine(2503) in 23S rRNA + 2 reduced [2Fe-2S]-[ferredoxin] + 2 S-adenosyl-L-methionine = 2-methyladenosine(2503) in 23S rRNA + 5'-deoxyadenosine + L-methionine + 2 oxidized [2Fe-2S]-[ferredoxin] + S-adenosyl-L-homocysteine. It catalyses the reaction adenosine(37) in tRNA + 2 reduced [2Fe-2S]-[ferredoxin] + 2 S-adenosyl-L-methionine = 2-methyladenosine(37) in tRNA + 5'-deoxyadenosine + L-methionine + 2 oxidized [2Fe-2S]-[ferredoxin] + S-adenosyl-L-homocysteine. Functionally, specifically methylates position 2 of adenine 2503 in 23S rRNA and position 2 of adenine 37 in tRNAs. m2A2503 modification seems to play a crucial role in the proofreading step occurring at the peptidyl transferase center and thus would serve to optimize ribosomal fidelity. This chain is Dual-specificity RNA methyltransferase RlmN, found in Bartonella bacilliformis (strain ATCC 35685 / KC583 / Herrer 020/F12,63).